Reading from the N-terminus, the 448-residue chain is Glutamate--tRNA ligase (448 aa).

The 'HIGH' region signature appears at 10-20 (PSPTGFLHIGN). Residues 214–218 (KLSKR) carry the 'KMSKS' region motif. Lys217 is a binding site for ATP.

Belongs to the class-I aminoacyl-tRNA synthetase family. Glutamate--tRNA ligase type 1 subfamily. As to quaternary structure, monomer.

The protein resides in the cytoplasm. It catalyses the reaction tRNA(Glu) + L-glutamate + ATP = L-glutamyl-tRNA(Glu) + AMP + diphosphate. Its function is as follows. Catalyzes the attachment of glutamate to tRNA(Glu) in a two-step reaction: glutamate is first activated by ATP to form Glu-AMP and then transferred to the acceptor end of tRNA(Glu). This chain is Glutamate--tRNA ligase, found in Phytoplasma australiense.